We begin with the raw amino-acid sequence, 283 residues long: Thymidylate synthase (283 aa).

Arg-22 lines the dUMP pocket. The active-site Nucleophile is the Cys-160. Residues 180 to 183 (RSCD), Asn-191, and 221 to 223 (HIY) contribute to the dUMP site. Asp-183 lines the (6R)-5,10-methylene-5,6,7,8-tetrahydrofolate pocket. Ser-282 lines the (6R)-5,10-methylene-5,6,7,8-tetrahydrofolate pocket.

The protein belongs to the thymidylate synthase family. Bacterial-type ThyA subfamily. In terms of assembly, homodimer.

It localises to the cytoplasm. It carries out the reaction dUMP + (6R)-5,10-methylene-5,6,7,8-tetrahydrofolate = 7,8-dihydrofolate + dTMP. It participates in pyrimidine metabolism; dTTP biosynthesis. Catalyzes the reductive methylation of 2'-deoxyuridine-5'-monophosphate (dUMP) to 2'-deoxythymidine-5'-monophosphate (dTMP) while utilizing 5,10-methylenetetrahydrofolate (mTHF) as the methyl donor and reductant in the reaction, yielding dihydrofolate (DHF) as a by-product. This enzymatic reaction provides an intracellular de novo source of dTMP, an essential precursor for DNA biosynthesis. The sequence is that of Thymidylate synthase from Shewanella loihica (strain ATCC BAA-1088 / PV-4).